Here is a 697-residue protein sequence, read N- to C-terminus: Elongation factor G (697 aa).

Residues 8-283 (EHIRNIGICA…AVVDFLPSPT (276 aa)) form the tr-type G domain. GTP is bound by residues 17–24 (AHIDAGKT), 81–85 (DTPGH), and 135–138 (NKMD).

Belongs to the TRAFAC class translation factor GTPase superfamily. Classic translation factor GTPase family. EF-G/EF-2 subfamily.

It is found in the cytoplasm. Catalyzes the GTP-dependent ribosomal translocation step during translation elongation. During this step, the ribosome changes from the pre-translocational (PRE) to the post-translocational (POST) state as the newly formed A-site-bound peptidyl-tRNA and P-site-bound deacylated tRNA move to the P and E sites, respectively. Catalyzes the coordinated movement of the two tRNA molecules, the mRNA and conformational changes in the ribosome. The chain is Elongation factor G from Rickettsia rhipicephali.